The primary structure comprises 158 residues: NAD(P)H-quinone oxidoreductase subunit J, chloroplastic (158 aa).

It belongs to the complex I 30 kDa subunit family. In terms of assembly, NDH is composed of at least 16 different subunits, 5 of which are encoded in the nucleus.

The protein localises to the plastid. It is found in the chloroplast thylakoid membrane. The enzyme catalyses a plastoquinone + NADH + (n+1) H(+)(in) = a plastoquinol + NAD(+) + n H(+)(out). The catalysed reaction is a plastoquinone + NADPH + (n+1) H(+)(in) = a plastoquinol + NADP(+) + n H(+)(out). Its function is as follows. NDH shuttles electrons from NAD(P)H:plastoquinone, via FMN and iron-sulfur (Fe-S) centers, to quinones in the photosynthetic chain and possibly in a chloroplast respiratory chain. The immediate electron acceptor for the enzyme in this species is believed to be plastoquinone. Couples the redox reaction to proton translocation, and thus conserves the redox energy in a proton gradient. This is NAD(P)H-quinone oxidoreductase subunit J, chloroplastic from Ranunculus macranthus (Large buttercup).